The sequence spans 325 residues: tRNA N(3)-methylcytidine methyltransferase Mettl2 (325 aa).

Positions 96 and 100 each coordinate S-adenosyl-L-methionine. Residues Tyr100, His112, Glu138, Gly140, Asp165, Asp191, and Ile212 each coordinate S-adenosyl-L-homocysteine. The S-adenosyl-L-methionine site is built by Gly140, Asp165, Asp191, and Ile212.

Belongs to the methyltransferase superfamily. METL family. In terms of assembly, interacts with Psn. As to expression, widely expressed. Expressed in ovaries, head, thorax and abdomen of adult flies, and in the CNS of third instar larvae. Isoform 2 is predominantly expressed in larvae and in adult tissues that have been tested.

Its function is as follows. Probable methyltransferase. This chain is tRNA N(3)-methylcytidine methyltransferase Mettl2, found in Drosophila melanogaster (Fruit fly).